The primary structure comprises 345 residues: Biotin synthase (345 aa).

The Radical SAM core domain occupies 39–266 (NEVQVSTLLS…ASHVRLSAGR (228 aa)). 3 residues coordinate [4Fe-4S] cluster: Cys54, Cys58, and Cys61. 4 residues coordinate [2Fe-2S] cluster: Cys98, Cys129, Cys189, and Arg261.

It belongs to the radical SAM superfamily. Biotin synthase family. Homodimer. The cofactor is [4Fe-4S] cluster. [2Fe-2S] cluster serves as cofactor.

It catalyses the reaction (4R,5S)-dethiobiotin + (sulfur carrier)-SH + 2 reduced [2Fe-2S]-[ferredoxin] + 2 S-adenosyl-L-methionine = (sulfur carrier)-H + biotin + 2 5'-deoxyadenosine + 2 L-methionine + 2 oxidized [2Fe-2S]-[ferredoxin]. It functions in the pathway cofactor biosynthesis; biotin biosynthesis; biotin from 7,8-diaminononanoate: step 2/2. In terms of biological role, catalyzes the conversion of dethiobiotin (DTB) to biotin by the insertion of a sulfur atom into dethiobiotin via a radical-based mechanism. The protein is Biotin synthase of Idiomarina loihiensis (strain ATCC BAA-735 / DSM 15497 / L2-TR).